A 318-amino-acid chain; its full sequence is Methionyl-tRNA formyltransferase (318 aa).

Residue 112–115 (SILP) coordinates (6S)-5,6,7,8-tetrahydrofolate.

The protein belongs to the Fmt family.

The catalysed reaction is L-methionyl-tRNA(fMet) + (6R)-10-formyltetrahydrofolate = N-formyl-L-methionyl-tRNA(fMet) + (6S)-5,6,7,8-tetrahydrofolate + H(+). In terms of biological role, attaches a formyl group to the free amino group of methionyl-tRNA(fMet). The formyl group appears to play a dual role in the initiator identity of N-formylmethionyl-tRNA by promoting its recognition by IF2 and preventing the misappropriation of this tRNA by the elongation apparatus. The chain is Methionyl-tRNA formyltransferase from Haemophilus influenzae (strain PittEE).